Reading from the N-terminus, the 95-residue chain is Aspartyl/glutamyl-tRNA(Asn/Gln) amidotransferase subunit C (95 aa).

The protein belongs to the GatC family. As to quaternary structure, heterotrimer of A, B and C subunits.

It catalyses the reaction L-glutamyl-tRNA(Gln) + L-glutamine + ATP + H2O = L-glutaminyl-tRNA(Gln) + L-glutamate + ADP + phosphate + H(+). The enzyme catalyses L-aspartyl-tRNA(Asn) + L-glutamine + ATP + H2O = L-asparaginyl-tRNA(Asn) + L-glutamate + ADP + phosphate + 2 H(+). Allows the formation of correctly charged Asn-tRNA(Asn) or Gln-tRNA(Gln) through the transamidation of misacylated Asp-tRNA(Asn) or Glu-tRNA(Gln) in organisms which lack either or both of asparaginyl-tRNA or glutaminyl-tRNA synthetases. The reaction takes place in the presence of glutamine and ATP through an activated phospho-Asp-tRNA(Asn) or phospho-Glu-tRNA(Gln). The polypeptide is Aspartyl/glutamyl-tRNA(Asn/Gln) amidotransferase subunit C (Chlorobium luteolum (strain DSM 273 / BCRC 81028 / 2530) (Pelodictyon luteolum)).